The chain runs to 125 residues: Fluoride-specific ion channel FluC (125 aa).

4 helical membrane-spanning segments follow: residues 1 to 21 (MFAT…ARYG), 34 to 54 (FPWA…FLFF), 72 to 92 (TGGL…LVLF), and 101 to 121 (LLYM…GAWI). 2 residues coordinate Na(+): G76 and T79.

Belongs to the fluoride channel Fluc/FEX (TC 1.A.43) family.

It is found in the cell inner membrane. The catalysed reaction is fluoride(in) = fluoride(out). Its activity is regulated as follows. Na(+) is not transported, but it plays an essential structural role and its presence is essential for fluoride channel function. Its function is as follows. Fluoride-specific ion channel. Important for reducing fluoride concentration in the cell, thus reducing its toxicity. The chain is Fluoride-specific ion channel FluC from Acidithiobacillus ferrooxidans (strain ATCC 23270 / DSM 14882 / CIP 104768 / NCIMB 8455) (Ferrobacillus ferrooxidans (strain ATCC 23270)).